Here is a 240-residue protein sequence, read N- to C-terminus: Uridylate kinase (240 aa).

Residue 14–17 (KLSG) coordinates ATP. Gly56 provides a ligand contact to UMP. ATP contacts are provided by Gly57 and Arg61. Residues Asp76 and 137–144 (TGNPFFTT) contribute to the UMP site. Residues Thr164, Tyr170, and Asp173 each contribute to the ATP site.

The protein belongs to the UMP kinase family. Homohexamer.

It localises to the cytoplasm. The enzyme catalyses UMP + ATP = UDP + ADP. It functions in the pathway pyrimidine metabolism; CTP biosynthesis via de novo pathway; UDP from UMP (UMPK route): step 1/1. With respect to regulation, inhibited by UTP. Its function is as follows. Catalyzes the reversible phosphorylation of UMP to UDP. This Albidiferax ferrireducens (strain ATCC BAA-621 / DSM 15236 / T118) (Rhodoferax ferrireducens) protein is Uridylate kinase.